The chain runs to 72 residues: Small ribosomal subunit protein bS20 (72 aa).

The protein belongs to the bacterial ribosomal protein bS20 family.

In terms of biological role, binds directly to 16S ribosomal RNA. This chain is Small ribosomal subunit protein bS20 (rpsT), found in Aeromonas hydrophila.